Consider the following 245-residue polypeptide: Ribosomal RNA large subunit methyltransferase E (245 aa).

Glycine 58, tryptophan 60, aspartate 78, aspartate 96, and aspartate 123 together coordinate S-adenosyl-L-methionine. Catalysis depends on lysine 163, which acts as the Proton acceptor.

The protein belongs to the class I-like SAM-binding methyltransferase superfamily. RNA methyltransferase RlmE family.

The protein resides in the cytoplasm. The enzyme catalyses uridine(2552) in 23S rRNA + S-adenosyl-L-methionine = 2'-O-methyluridine(2552) in 23S rRNA + S-adenosyl-L-homocysteine + H(+). Its function is as follows. Specifically methylates the uridine in position 2552 of 23S rRNA at the 2'-O position of the ribose in the fully assembled 50S ribosomal subunit. The chain is Ribosomal RNA large subunit methyltransferase E from Methanocaldococcus jannaschii (strain ATCC 43067 / DSM 2661 / JAL-1 / JCM 10045 / NBRC 100440) (Methanococcus jannaschii).